Here is a 366-residue protein sequence, read N- to C-terminus: Peptide chain release factor 2 (366 aa).

Glutamine 251 is subject to N5-methylglutamine.

This sequence belongs to the prokaryotic/mitochondrial release factor family. In terms of processing, methylated by PrmC. Methylation increases the termination efficiency of RF2.

The protein resides in the cytoplasm. Peptide chain release factor 2 directs the termination of translation in response to the peptide chain termination codons UGA and UAA. This Campylobacter concisus (strain 13826) protein is Peptide chain release factor 2.